The chain runs to 100 residues: NAD(P)H-quinone oxidoreductase subunit 4L, chloroplastic (100 aa).

The next 3 membrane-spanning stretches (helical) occupy residues 1–21, 31–51, and 60–80; these read MLEHVLVLSAYLFSVGLYGLI, ICLELIFNAVNINFVTFSDFF, and IFAIFVIAIAAAEAAIGLAIL.

Belongs to the complex I subunit 4L family. In terms of assembly, NDH is composed of at least 16 different subunits, 5 of which are encoded in the nucleus.

It is found in the plastid. The protein resides in the chloroplast thylakoid membrane. It carries out the reaction a plastoquinone + NADH + (n+1) H(+)(in) = a plastoquinol + NAD(+) + n H(+)(out). It catalyses the reaction a plastoquinone + NADPH + (n+1) H(+)(in) = a plastoquinol + NADP(+) + n H(+)(out). In terms of biological role, NDH shuttles electrons from NAD(P)H:plastoquinone, via FMN and iron-sulfur (Fe-S) centers, to quinones in the photosynthetic chain and possibly in a chloroplast respiratory chain. The immediate electron acceptor for the enzyme in this species is believed to be plastoquinone. Couples the redox reaction to proton translocation, and thus conserves the redox energy in a proton gradient. The protein is NAD(P)H-quinone oxidoreductase subunit 4L, chloroplastic of Trachelium caeruleum (Blue throatwort).